The primary structure comprises 501 residues: Raftlin-2 (501 aa).

2 disordered regions span residues Met-1–Phe-20 and Ser-196–Gly-238. Gly-2 carries N-myristoyl glycine lipidation. Residue Cys-3 is the site of S-palmitoyl cysteine attachment. Polar residues predominate over residues Met-224 to Ser-233. Ser-405 bears the Phosphoserine mark. Positions Ala-407–Pro-454 are disordered. Position 409 is a phosphothreonine (Thr-409). The span at Thr-410–Lys-425 shows a compositional bias: basic and acidic residues. Residues Thr-427 to Pro-440 are compositionally biased toward polar residues. The residue at position 430 (Ser-430) is a Phosphoserine. Residues Glu-442 to Arg-451 are compositionally biased toward basic and acidic residues.

Belongs to the raftlin family.

The protein localises to the cell membrane. Upon bacterial lipopolysaccharide stimulation, mediates clathrin-dependent internalization of TLR4 in dendritic cells, resulting in activation of TICAM1-mediated signaling and subsequent IFNB1 production. May regulate B-cell antigen receptor mediated-signaling. The chain is Raftlin-2 (RFTN2) from Pongo abelii (Sumatran orangutan).